Consider the following 270-residue polypeptide: Ribosomal RNA small subunit methyltransferase A (270 aa).

The S-adenosyl-L-methionine site is built by asparagine 18, leucine 20, glycine 45, glutamate 66, aspartate 91, and asparagine 112.

Belongs to the class I-like SAM-binding methyltransferase superfamily. rRNA adenine N(6)-methyltransferase family. RsmA subfamily.

Its subcellular location is the cytoplasm. The enzyme catalyses adenosine(1518)/adenosine(1519) in 16S rRNA + 4 S-adenosyl-L-methionine = N(6)-dimethyladenosine(1518)/N(6)-dimethyladenosine(1519) in 16S rRNA + 4 S-adenosyl-L-homocysteine + 4 H(+). Functionally, specifically dimethylates two adjacent adenosines (A1518 and A1519) in the loop of a conserved hairpin near the 3'-end of 16S rRNA in the 30S particle. May play a critical role in biogenesis of 30S subunits. In Psychromonas ingrahamii (strain DSM 17664 / CCUG 51855 / 37), this protein is Ribosomal RNA small subunit methyltransferase A.